We begin with the raw amino-acid sequence, 400 residues long: Envelope glycoprotein M (400 aa).

The Intravirion portion of the chain corresponds to 1 to 16 (MRASKSDRFLMSSWVK). The chain crosses the membrane as a helical span at residues 17–37 (LLFVAVIMYICSAVVPMAATY). Residues 38-76 (EGLGFPCYFNNLVNYSALNLTVRNSAKHLTPTLFLEKPE) are Virion surface-facing. The chain crosses the membrane as a helical span at residues 77-97 (MLVYIFWTFIVDGIAIVYYCL). Topologically, residues 98-113 (AAVAVYRAKHVHATTM) are intravirion. A helical transmembrane segment spans residues 114–134 (MSMQSWIALLGSHSVLYVAIL). The Virion surface portion of the chain corresponds to 135 to 152 (RMWSMQLFIHVLSYKHVL). The chain crosses the membrane as a helical span at residues 153–173 (MAAFVYCIHFCISFAHIQSLI). At 174–208 (TCNSAQWEIPLLEQHVPDNTMMESLLTRWKPVCVN) the chain is on the intravirion side. Residues 209-229 (LYLSTTALEMLLFSLSTMMAV) traverse the membrane as a helical segment. Residues 230–234 (GNSFY) are Virion surface-facing. A helical transmembrane segment spans residues 235-255 (VLVSDAIFGAVNMFLALTVVW). The Intravirion portion of the chain corresponds to 256-270 (YINTEFFLVKFMRRQ). The helical transmembrane segment at 271–291 (VGFYVGVFVGYLILLLPVIRY) threads the bilayer. At 292–300 (ENAFVQANL) the chain is on the virion surface side. The chain crosses the membrane as a helical span at residues 301–321 (HYIVAINISCIPILCILAIVI). The Intravirion portion of the chain corresponds to 322–400 (RVIRSDWGLC…EIDETQMIFI (79 aa)). The segment at 348–394 (DRTPTVHQKPPPLPAKTRARAKVKDISTPAPRTQYQSDHESDSEIDE) is disordered.

Belongs to the herpesviridae glycoprotein M family. Interacts (via N-terminus) with gN (via N-terminus). The gM-gN heterodimer forms the gCII complex. N-glycosylated.

It localises to the virion membrane. The protein localises to the host Golgi apparatus. Its subcellular location is the host trans-Golgi network. It is found in the host endosome membrane. The protein resides in the host nucleus inner membrane. Envelope glycoprotein important for virion assembly and egress. Plays a role in the correct incorporation of gH-gL into virion membrane. Directs the glycoprotein N (gN) to the host trans-Golgi network. The polypeptide is Envelope glycoprotein M (Homo sapiens (Human)).